Reading from the N-terminus, the 56-residue chain is Potassium channel toxin alpha-KTx 9.8 (56 aa).

A signal peptide spans 1-19 (MSRLFTLVLIVLAMNVMMA). The propeptide occupies 20-28 (IISDPVVEA). 3 disulfide bridges follow: C31-C47, C34-C52, and C38-C54.

The protein belongs to the short scorpion toxin superfamily. Potassium channel inhibitor family. Alpha-KTx 09 subfamily. As to expression, expressed by the venom gland.

It is found in the secreted. Its function is as follows. Potassium channel inhibitor. This Buthus israelis (Israeli scorpion) protein is Potassium channel toxin alpha-KTx 9.8.